The sequence spans 876 residues: Alanine--tRNA ligase (876 aa).

Positions 564, 568, 666, and 670 each coordinate Zn(2+).

This sequence belongs to the class-II aminoacyl-tRNA synthetase family. Homotetramer. Zn(2+) is required as a cofactor.

Its subcellular location is the cytoplasm. It catalyses the reaction tRNA(Ala) + L-alanine + ATP = L-alanyl-tRNA(Ala) + AMP + diphosphate. Functionally, catalyzes the attachment of alanine to tRNA(Ala) in a two-step reaction: alanine is first activated by ATP to form Ala-AMP and then transferred to the acceptor end of tRNA(Ala). Also edits incorrectly charged Ser-tRNA(Ala) and Gly-tRNA(Ala) via its editing domain. The sequence is that of Alanine--tRNA ligase from Salmonella paratyphi A (strain ATCC 9150 / SARB42).